A 72-amino-acid chain; its full sequence is Small proline-rich protein 2E (72 aa).

Low complexity predominate over residues 1-11; that stretch reads MSYQQQQCKQP. The segment at 1–20 is disordered; it reads MSYQQQQCKQPCQPPPVCPT. Tandem repeats lie at residues 21 to 29, 30 to 38, and 39 to 47. Positions 21-47 are 3 X 9 AA tandem repeats of P-K-C-P-[EQ]-P-C-P-P; that stretch reads PKCPEPCPPPKCPEPCPPPKCPQPCPP. The interval 42-72 is disordered; it reads PQPCPPQQCQQKCPPVTPSPPCQPKCPPKSK. Pro residues predominate over residues 56-72; the sequence is PVTPSPPCQPKCPPKSK.

Belongs to the cornifin (SPRR) family.

It is found in the cytoplasm. In terms of biological role, cross-linked envelope protein of keratinocytes. It is a keratinocyte protein that first appears in the cell cytosol, but ultimately becomes cross-linked to membrane proteins by transglutaminase. All that results in the formation of an insoluble envelope beneath the plasma membrane. The chain is Small proline-rich protein 2E (SPRR2E) from Homo sapiens (Human).